The sequence spans 262 residues: Ribosome biogenesis GTPase A (262 aa).

One can recognise a CP-type G domain in the interval lysine 12 to lysine 157. Residues asparagine 54–aspartate 57, asparagine 109–threonine 114, and glycine 153 each bind GTP.

It belongs to the TRAFAC class YlqF/YawG GTPase family. MTG1 subfamily.

Its subcellular location is the cytoplasm. Functionally, required for a late step of 50S ribosomal subunit assembly. Has GTPase activity. Binds to the 23S rRNA. This chain is Ribosome biogenesis GTPase A, found in Thermotoga maritima (strain ATCC 43589 / DSM 3109 / JCM 10099 / NBRC 100826 / MSB8).